The sequence spans 223 residues: Small heat shock protein hspI, mitochondrial (223 aa).

A mitochondrion-targeting transit peptide spans 1–23 (MYKLSKTTPFFFRRAFLCGRRGG). The 115-residue stretch at 109–223 (KTRGFRSPKT…YVKSTTINVQ (115 aa)) folds into the sHSP domain.

Belongs to the small heat shock protein (HSP20) family.

It is found in the mitochondrion. This chain is Small heat shock protein hspI, mitochondrial (hspI), found in Dictyostelium discoideum (Social amoeba).